The primary structure comprises 393 residues: Acetylornithine aminotransferase 1 (393 aa).

N(2)-acetyl-L-ornithine is bound at residue arginine 131. Residue 215-218 coordinates pyridoxal 5'-phosphate; the sequence is DEVQ. Residue lysine 244 is modified to N6-(pyridoxal phosphate)lysine. A N(2)-acetyl-L-ornithine-binding site is contributed by threonine 272. Pyridoxal 5'-phosphate is bound at residue threonine 273.

It belongs to the class-III pyridoxal-phosphate-dependent aminotransferase family. ArgD subfamily. Homodimer. It depends on pyridoxal 5'-phosphate as a cofactor.

It localises to the cytoplasm. The catalysed reaction is N(2)-acetyl-L-ornithine + 2-oxoglutarate = N-acetyl-L-glutamate 5-semialdehyde + L-glutamate. The protein operates within amino-acid biosynthesis; L-arginine biosynthesis; N(2)-acetyl-L-ornithine from L-glutamate: step 4/4. The protein is Acetylornithine aminotransferase 1 of Bordetella bronchiseptica (strain ATCC BAA-588 / NCTC 13252 / RB50) (Alcaligenes bronchisepticus).